A 310-amino-acid chain; its full sequence is ADP-L-glycero-D-manno-heptose-6-epimerase (310 aa).

Residues 10–11 (FI), 31–32 (DN), Lys38, Lys53, 75–79 (EGACS), and Asn92 each bind NADP(+). Residue Tyr140 is the Proton acceptor of the active site. Lys144 lines the NADP(+) pocket. Asn169 lines the substrate pocket. Residues Val170 and Lys178 each contribute to the NADP(+) site. Lys178 (proton acceptor) is an active-site residue. Substrate contacts are provided by residues Gly180, His187, 201-204 (FAGS), Arg209, and Tyr272.

It belongs to the NAD(P)-dependent epimerase/dehydratase family. HldD subfamily. As to quaternary structure, homopentamer. Requires NADP(+) as cofactor.

The catalysed reaction is ADP-D-glycero-beta-D-manno-heptose = ADP-L-glycero-beta-D-manno-heptose. The protein operates within nucleotide-sugar biosynthesis; ADP-L-glycero-beta-D-manno-heptose biosynthesis; ADP-L-glycero-beta-D-manno-heptose from D-glycero-beta-D-manno-heptose 7-phosphate: step 4/4. Catalyzes the interconversion between ADP-D-glycero-beta-D-manno-heptose and ADP-L-glycero-beta-D-manno-heptose via an epimerization at carbon 6 of the heptose. In Sodalis glossinidius (strain morsitans), this protein is ADP-L-glycero-D-manno-heptose-6-epimerase.